A 291-amino-acid polypeptide reads, in one-letter code: Elongation factor Ts (291 aa).

The tract at residues 81 to 84 (TDFV) is involved in Mg(2+) ion dislocation from EF-Tu. The segment at 271–291 (EGKEKKDESFADEVMAQVRDS) is disordered.

The protein belongs to the EF-Ts family.

The protein resides in the cytoplasm. Associates with the EF-Tu.GDP complex and induces the exchange of GDP to GTP. It remains bound to the aminoacyl-tRNA.EF-Tu.GTP complex up to the GTP hydrolysis stage on the ribosome. This is Elongation factor Ts from Halorhodospira halophila (strain DSM 244 / SL1) (Ectothiorhodospira halophila (strain DSM 244 / SL1)).